Here is a 554-residue protein sequence, read N- to C-terminus: Hydroxylamine reductase (554 aa).

Residues cysteine 3, cysteine 6, cysteine 18, and cysteine 25 each coordinate [2Fe-2S] cluster. Residues histidine 252, glutamate 276, cysteine 320, cysteine 408, cysteine 436, cysteine 461, glutamate 495, and lysine 497 each contribute to the hybrid [4Fe-2O-2S] cluster site. A Cysteine persulfide modification is found at cysteine 408.

This sequence belongs to the HCP family. [2Fe-2S] cluster serves as cofactor. Requires hybrid [4Fe-2O-2S] cluster as cofactor.

It is found in the cytoplasm. The catalysed reaction is A + NH4(+) + H2O = hydroxylamine + AH2 + H(+). In terms of biological role, catalyzes the reduction of hydroxylamine to form NH(3) and H(2)O. This is Hydroxylamine reductase from Shewanella baltica (strain OS223).